The following is a 281-amino-acid chain: Succinate dehydrogenase [ubiquinone] iron-sulfur subunit 1, mitochondrial (281 aa).

The N-terminal 25 residues, 1 to 25 (MAAAALLRRSPAARALLSPALSSRL), are a transit peptide targeting the mitochondrion. The interval 26 to 48 (VASKPHSSSPAPPPPPSKAGANT) is disordered. In terms of domain architecture, 2Fe-2S ferredoxin-type spans 49 to 141 (KTFSIYRWDP…ASTISPLPHM (93 aa)). [2Fe-2S] cluster-binding residues include Cys102, Cys107, and Cys122. One can recognise a 4Fe-4S ferredoxin-type domain in the interval 184 to 214 (DRAKLDGMYECILCACCSTSCPSYWWNPEEY). Positions 194, 197, and 200 each coordinate [4Fe-4S] cluster. Cys204 lines the [3Fe-4S] cluster pocket. Trp209 is an a ubiquinone binding site. Positions 251 and 257 each coordinate [3Fe-4S] cluster. Cys261 is a [4Fe-4S] cluster binding site.

This sequence belongs to the succinate dehydrogenase/fumarate reductase iron-sulfur protein family. As to quaternary structure, component of complex II composed of eight subunits in plants: four classical SDH subunits SDH1, SDH2, SDH3 and SDH4 (a flavoprotein (FP), an iron-sulfur protein (IP), and a cytochrome b composed of a large and a small subunit.), as well as four subunits unknown in mitochondria from bacteria and heterotrophic eukaryotes. It depends on [2Fe-2S] cluster as a cofactor. Requires [3Fe-4S] cluster as cofactor. [4Fe-4S] cluster is required as a cofactor.

It localises to the mitochondrion inner membrane. It carries out the reaction a quinone + succinate = fumarate + a quinol. Its pathway is carbohydrate metabolism; tricarboxylic acid cycle; fumarate from succinate (eukaryal route): step 1/1. Functionally, iron-sulfur protein (IP) subunit of succinate dehydrogenase (SDH) that is involved in complex II of the mitochondrial electron transport chain and is responsible for transferring electrons from succinate to ubiquinone (coenzyme Q). This Oryza sativa subsp. japonica (Rice) protein is Succinate dehydrogenase [ubiquinone] iron-sulfur subunit 1, mitochondrial.